Consider the following 263-residue polypeptide: MASPQLRGYGVQAIPVLLLLLLLLLLPLRVTPGTTCPPPVSIEHADIRVKNYSVNSRERYVCNSGFKRKAGTSTLIECVINKNTNVAHWTTPSLKCIRDPSLAHYSPVPTVVTPKVTSQPESPSPSAKEPEAFSPKSDTAMTTETAIMPGSRLTPSQTTSAGTTGTGSHKSSRAPSLAATMTLEPTASTSLRITEISPHSSKMTKVAISTSVLLVGAGVVMAFLAWYIKSRQPSQPCRVEVETMETVPMTVRASSKEDEDTGA.

The signal sequence occupies residues 1–32; sequence MASPQLRGYGVQAIPVLLLLLLLLLLPLRVTP. Residues 33–205 lie on the Extracellular side of the membrane; that stretch reads GTTCPPPVSI…ISPHSSKMTK (173 aa). The Sushi domain occupies 34–98; that stretch reads TTCPPPVSIE…WTTPSLKCIR (65 aa). 2 disulfides stabilise this stretch: C36/C78 and C62/C96. N51 carries an N-linked (GlcNAc...) asparagine glycan. Low complexity predominate over residues 113–135; it reads TPKVTSQPESPSPSAKEPEAFSP. The interval 113-178 is disordered; the sequence is TPKVTSQPES…HKSSRAPSLA (66 aa). Polar residues predominate over residues 136–145; sequence KSDTAMTTET. Positions 154 to 169 are enriched in low complexity; the sequence is TPSQTTSAGTTGTGSH. Residues 206 to 226 traverse the membrane as a helical segment; sequence VAISTSVLLVGAGVVMAFLAW. Topologically, residues 227 to 263 are cytoplasmic; the sequence is YIKSRQPSQPCRVEVETMETVPMTVRASSKEDEDTGA.

As to quaternary structure, the interleukin-15 receptor IL15R is a heterotrimer of IL15RA, IL2RB and IL2RG. IL15RA also self-associates. Interacts with SYK. Post-translationally, N-glycosylated and O-glycosylated. A soluble form (sIL-15RA) arises from proteolytic shedding of the membrane-anchored receptor. It also binds IL15 and thus interferes with IL15 binding to the membrane receptor. As to expression, widely expressed.

The protein localises to the membrane. Its subcellular location is the nucleus membrane. It localises to the cell surface. The protein resides in the secreted. It is found in the extracellular space. In terms of biological role, high-affinity receptor for interleukin-15. Can signal both in cis and trans where IL15R from one subset of cells presents IL15 to neighboring IL2RG-expressing cells. In neutrophils, binds and activates kinase SYK in response to IL15 stimulation. In neutrophils, required for IL15-induced phagocytosis in a SYK-dependent manner. This chain is Interleukin-15 receptor subunit alpha (Il15ra), found in Mus musculus (Mouse).